Here is a 366-residue protein sequence, read N- to C-terminus: MSMNSFGHLFRVTTWGESHGTALGATVDGCPPGVAIDAGKIQHWLDKRKPGQNKYTTQRREADEVKILSGTFEGVTTGTPVQLMIENTDQRSKDYGDIKDKFRPGHADITYFQKYGVRDYRGGGRSSARETAARVAAGGLAREAIKSIAPGIDIKGYMTRMGAHEIDRSRFDWDQIDANPFWTPDAQAADEWASYLDGLRKSGSSVGAVIEVVARGVPAGLGAPIYAKLDTDLAAAMMSINAVKGVEIGEGMSAAMLTGELNADEISMGRDGPQYSSNHAGGILGGISTGQDIVVRFAVKPTSSILTTRKTITKSGEDTEIITKGRHDPCVGIRAVPVGEAMMACVLLDHLLLHRGQVGQNQGHIG.

Residue Arg48 participates in NADP(+) binding. Residues 125–127 (RSS), 241–242 (NA), Gly285, 300–304 (KPTSS), and Arg326 contribute to the FMN site.

Belongs to the chorismate synthase family. In terms of assembly, homotetramer. FMNH2 is required as a cofactor.

The enzyme catalyses 5-O-(1-carboxyvinyl)-3-phosphoshikimate = chorismate + phosphate. The protein operates within metabolic intermediate biosynthesis; chorismate biosynthesis; chorismate from D-erythrose 4-phosphate and phosphoenolpyruvate: step 7/7. Its function is as follows. Catalyzes the anti-1,4-elimination of the C-3 phosphate and the C-6 proR hydrogen from 5-enolpyruvylshikimate-3-phosphate (EPSP) to yield chorismate, which is the branch point compound that serves as the starting substrate for the three terminal pathways of aromatic amino acid biosynthesis. This reaction introduces a second double bond into the aromatic ring system. This Roseobacter denitrificans (strain ATCC 33942 / OCh 114) (Erythrobacter sp. (strain OCh 114)) protein is Chorismate synthase.